Reading from the N-terminus, the 110-residue chain is Large ribosomal subunit protein uL22 (110 aa).

The protein belongs to the universal ribosomal protein uL22 family. In terms of assembly, part of the 50S ribosomal subunit.

In terms of biological role, this protein binds specifically to 23S rRNA; its binding is stimulated by other ribosomal proteins, e.g. L4, L17, and L20. It is important during the early stages of 50S assembly. It makes multiple contacts with different domains of the 23S rRNA in the assembled 50S subunit and ribosome. The globular domain of the protein is located near the polypeptide exit tunnel on the outside of the subunit, while an extended beta-hairpin is found that lines the wall of the exit tunnel in the center of the 70S ribosome. The polypeptide is Large ribosomal subunit protein uL22 (Idiomarina loihiensis (strain ATCC BAA-735 / DSM 15497 / L2-TR)).